The chain runs to 394 residues: UPF0229 protein RBAM_009260 (394 aa).

The protein belongs to the UPF0229 family.

This is UPF0229 protein RBAM_009260 from Bacillus velezensis (strain DSM 23117 / BGSC 10A6 / LMG 26770 / FZB42) (Bacillus amyloliquefaciens subsp. plantarum).